The following is a 480-amino-acid chain: Aromatic-L-amino-acid decarboxylase (480 aa).

Methionine 1 bears the N-acetylmethionine mark. 2 repeat units span residues 58–115 (RDIE…TELE) and 118–178 (MMDW…TQAA). The 2 X approximate tandem repeats stretch occupies residues 58–178 (RDIEKIIMPG…AASPELTQAA (121 aa)). Residue threonine 82 coordinates substrate. Pyridoxal 5'-phosphate is bound by residues alanine 148 and serine 149. Histidine 192 serves as a coordination point for substrate. Positions 246 and 300 each coordinate pyridoxal 5'-phosphate. Lysine 303 is modified (N6-(pyridoxal phosphate)lysine).

The protein belongs to the group II decarboxylase family. In terms of assembly, homodimer. Pyridoxal 5'-phosphate is required as a cofactor.

The catalysed reaction is L-dopa + H(+) = dopamine + CO2. It carries out the reaction 5-hydroxy-L-tryptophan + H(+) = serotonin + CO2. It participates in catecholamine biosynthesis; dopamine biosynthesis; dopamine from L-tyrosine: step 2/2. In terms of biological role, catalyzes the decarboxylation of L-3,4-dihydroxyphenylalanine (DOPA) to dopamine and L-5-hydroxytryptophan to serotonin. This is Aromatic-L-amino-acid decarboxylase from Rattus norvegicus (Rat).